Consider the following 404-residue polypeptide: Alkane 1-monooxygenase 1 (404 aa).

Helical transmembrane passes span 25-45, 47-67, 94-114, and 119-139; these read HLWILSVLWPATPIIGLYLVS, TGWSIWYGLVLILWYGLVPLI, VLTYLTVPIHYAALIISAWWV, and IGVFEFLALALSLGIVNGLAL. Residues H143 and H147 each contribute to the Fe cation site. A helical membrane pass occupies residues 151-171; it reads TFDRWMAKLVLAVVGYGHFFI. The Fe cation site is built by H173, H177, and H178. The helical transmembrane segment at 241–261 threads the bilayer; the sequence is VVLYAALLAFFGPLMLIFLPI. Residues H317, H320, and H321 each coordinate Fe cation.

This sequence belongs to the fatty acid desaturase type 1 family. AlkB subfamily. It depends on Fe(3+) as a cofactor.

It is found in the cell inner membrane. It catalyses the reaction octane + 2 reduced [rubredoxin] + O2 + 2 H(+) = 2 oxidized [rubredoxin] + octan-1-ol + H2O. Its pathway is hydrocarbon metabolism; alkane degradation. Catalyzes the hydroxylation of n-alkanes and fatty acids in the presence of a NADH-rubredoxin reductase and rubredoxin. It preferably hydroxylases C5-C12 hydrocarbons. The sequence is that of Alkane 1-monooxygenase 1 (alkB1) from Alcanivorax borkumensis (strain ATCC 700651 / DSM 11573 / NCIMB 13689 / SK2).